The following is a 75-amino-acid chain: Conotoxin Vt15.1 (75 aa).

Positions 1-19 (MMPVILPLLLSLAIRGGDG) are cleaved as a signal peptide. The propeptide occupies 20-43 (QAIQGDRDLIAKLFKRYQEHGLSV). Tryptophan amide is present on Trp-73.

Belongs to the conotoxin V superfamily. Contains 4 disulfide bonds. Expressed by the venom duct.

The protein localises to the secreted. The protein is Conotoxin Vt15.1 of Conus planorbis (Planorbis cone).